Consider the following 87-residue polypeptide: MAKGQSLQDPFLNALRRERIPVSIYLVNGIKLQGQIESFDQFVILLKNTVSQMVYKHAISTVVPARAVNHHQHAPGAAGEEQGEAEA.

One can recognise a Sm domain in the interval 9–68 (DPFLNALRRERIPVSIYLVNGIKLQGQIESFDQFVILLKNTVSQMVYKHAISTVVPARAV).

Belongs to the Hfq family. Homohexamer.

RNA chaperone that binds small regulatory RNA (sRNAs) and mRNAs to facilitate mRNA translational regulation in response to envelope stress, environmental stress and changes in metabolite concentrations. Also binds with high specificity to tRNAs. The sequence is that of RNA-binding protein Hfq from Aeromonas hydrophila subsp. hydrophila (strain ATCC 7966 / DSM 30187 / BCRC 13018 / CCUG 14551 / JCM 1027 / KCTC 2358 / NCIMB 9240 / NCTC 8049).